We begin with the raw amino-acid sequence, 974 residues long: MASNNVAQFAAELKMPAGVLLEQLQAAGVQKASEDDALSETDKARLLDHLRKSHGATDGDKRKITLTRKHTSEIKQSDATGKARTIQVEVRKKRTFVKRDDVAEGAEQGQAQVAEADDDAELKRREEEARREAELLEQQAQELLERQERLEREEAERRAREEAAEAERRRAEEEAAAKRAAAEAAAAQQAAAQQAAEAKQEAPGAQSAQEEARAAAERAAQREAAKKAEDAAREAADKARAEQEEIRKRREAAEAEARAIREMMNTPRKAVVKAVEPPKPVEAPKPAEAKGTLHKPAKPAGAGVQARPAVKKPAGATPATTQAPAAGAGDRNKKPGGGKGGWQDDAAKRRGIKTRGDSSGGVDRGWRGGPKGRGRHQDSASTFQAPTEPIVREVHVPETISVADLAHKMSIKASEVIKVMMKMGQMVTINQVLDQETAMIVVEELGHRAVAAKLDDPEALLVEGETSSDAEQLPRPPVVTVMGHVDHGKTSLLDHIRRAKVAAGEAGGITQHIGAYHVETPRGVITFLDTPGHEAFTAMRARGAKATDIVVLVVAADDGVMPQTKEAIAHAKAGGVPIVVAINKIDKPEANPDRVKQELVAEGVVPEEYGGDSPFVPVSAKTGAGIDDLLENVLLQAEVLELKAPVEAPAKGIVIEAKLDKGKGPVATILVQSGTLNRGDIVLAGSAYGRVRAMLDENGKPTKEAGPSIPVEIQGLSEVPGAGEEVIVLPDERKAREIALFRQGKFRDVKLAKQQAAKLESMLEQMGEGEVQNLPLIIKADVQGSQEALVQSLLKLSTDEVRVQIVHSAVGGISENDVNLATASKAVIIGFNTRADAQARKLAEANGIDIRYYNIIYDAVDEVKAAMSGMLAPEKREVITGMVEVRQVFKVPKIGTVAGCMVTDGIVKRSSSVRVLRNNVVIFTGELESLKRFKDDVKEVKQGFECGMSVKNFNDIVEGDQFEVFEVTEVARTL.

Disordered regions lie at residues 67–86, 101–133, and 146–385; these read TRKHTSEIKQSDATGKARTI, DVAEGAEQGQAQVAEADDDAELKRREEEARREA, and RQER…TFQA. The segment covering 105-114 has biased composition (low complexity); the sequence is GAEQGQAQVA. Basic and acidic residues-rich tracts occupy residues 121–133 and 146–181; these read ELKRREEEARREA and RQERLEREEAERRAREEAAEAERRRAEEEAAAKRAA. Low complexity predominate over residues 182–197; that stretch reads AEAAAAQQAAAQQAAE. Basic and acidic residues predominate over residues 210 to 261; it reads EEARAAAERAAQREAAKKAEDAAREAADKARAEQEEIRKRREAAEAEARAIR. Low complexity predominate over residues 313-329; that stretch reads PAGATPATTQAPAAGAG. Residues 358 to 371 show a composition bias toward gly residues; the sequence is SSGGVDRGWRGGPK. Residues 474–643 enclose the tr-type G domain; the sequence is PRPPVVTVMG…LLQAEVLELK (170 aa). A G1 region spans residues 483 to 490; it reads GHVDHGKT. 483 to 490 contacts GTP; that stretch reads GHVDHGKT. The segment at 508 to 512 is G2; sequence GITQH. A G3 region spans residues 529 to 532; the sequence is DTPG. Residues 529–533 and 583–586 contribute to the GTP site; these read DTPGH and NKID. The interval 583-586 is G4; that stretch reads NKID. Residues 619 to 621 are G5; it reads SAK.

This sequence belongs to the TRAFAC class translation factor GTPase superfamily. Classic translation factor GTPase family. IF-2 subfamily.

Its subcellular location is the cytoplasm. In terms of biological role, one of the essential components for the initiation of protein synthesis. Protects formylmethionyl-tRNA from spontaneous hydrolysis and promotes its binding to the 30S ribosomal subunits. Also involved in the hydrolysis of GTP during the formation of the 70S ribosomal complex. The protein is Translation initiation factor IF-2 of Burkholderia vietnamiensis (strain G4 / LMG 22486) (Burkholderia cepacia (strain R1808)).